The chain runs to 97 residues: Small cell adhesion glycoprotein (97 aa).

Residues 1–36 (MNNLPATPSPEELMTTPVFQAPETMSPQAEEASTAL) are Extracellular-facing. Thr-7 carries O-linked (GalNAc...) threonine glycosylation. An O-linked (GalNAc...) serine glycan is attached at Ser-9. 3 O-linked (GalNAc...) threonine glycosylation sites follow: Thr-15, Thr-16, and Thr-24. Ser-26 carries O-linked (GalNAc...) serine glycosylation. A helical; Signal-anchor for type III membrane protein membrane pass occupies residues 37 to 57 (IAVVITVVFLTLLSVVTLIFF). The Cytoplasmic segment spans residues 58-97 (YLYKNKGSYVTYEPAEGEPSAILQMETDSAKGKEKEEYFI).

It belongs to the SMAGP family. In terms of processing, O-glycosylated. The O-glycan is modified with sialic acid residues. In terms of tissue distribution, detected in brain (at protein level). Highly expressed in kidney and placenta. Detected in skin, breast, heart, lung, liver, prostate, spleen, small intestine, colon and stomach.

It localises to the cell membrane. Its subcellular location is the cytoplasmic vesicle membrane. May play a role in epithelial cell-cell contacts. May play a role in tumor invasiveness and metastasis formation. This is Small cell adhesion glycoprotein (Smagp) from Rattus norvegicus (Rat).